Consider the following 338-residue polypeptide: Glutamyl-tRNA reductase (338 aa).

Residues 50–53 (TCHR), Ser102, 107–109 (ETE), and Gln113 contribute to the substrate site. Residue Cys51 is the Nucleophile of the active site. 181–186 (GYSEIN) contacts NADP(+).

This sequence belongs to the glutamyl-tRNA reductase family. As to quaternary structure, homodimer.

The enzyme catalyses (S)-4-amino-5-oxopentanoate + tRNA(Glu) + NADP(+) = L-glutamyl-tRNA(Glu) + NADPH + H(+). It functions in the pathway porphyrin-containing compound metabolism; protoporphyrin-IX biosynthesis; 5-aminolevulinate from L-glutamyl-tRNA(Glu): step 1/2. Functionally, catalyzes the NADPH-dependent reduction of glutamyl-tRNA(Glu) to glutamate 1-semialdehyde (GSA). The protein is Glutamyl-tRNA reductase of Chlamydia abortus (strain DSM 27085 / S26/3) (Chlamydophila abortus).